The sequence spans 142 residues: Small ribosomal subunit protein bS6 (142 aa).

Residues 103 to 142 (KAAESREQRAPRGEDRPARVVADDVDDSDDDTDDEDSNDE) form a disordered region. Residues 105-124 (AESREQRAPRGEDRPARVVA) show a composition bias toward basic and acidic residues. Acidic residues predominate over residues 125–142 (DDVDDSDDDTDDEDSNDE).

It belongs to the bacterial ribosomal protein bS6 family.

Binds together with bS18 to 16S ribosomal RNA. The sequence is that of Small ribosomal subunit protein bS6 from Hahella chejuensis (strain KCTC 2396).